The following is a 335-amino-acid chain: Glyceraldehyde-3-phosphate dehydrogenase (335 aa).

Residues 15–16 (RI) and Asp-37 each bind NAD(+). D-glyceraldehyde 3-phosphate-binding positions include 155-157 (SCT), Thr-186, Arg-201, 214-215 (TG), and Arg-237. Residue Cys-156 is the Nucleophile of the active site. Residues Gln-301 and Asn-318 each coordinate NAD(+).

Belongs to the glyceraldehyde-3-phosphate dehydrogenase family. As to quaternary structure, homotetramer.

The protein localises to the cytoplasm. The enzyme catalyses D-glyceraldehyde 3-phosphate + phosphate + NADP(+) = (2R)-3-phospho-glyceroyl phosphate + NADPH + H(+). It catalyses the reaction D-glyceraldehyde 3-phosphate + phosphate + NAD(+) = (2R)-3-phospho-glyceroyl phosphate + NADH + H(+). Its pathway is carbohydrate degradation; glycolysis; pyruvate from D-glyceraldehyde 3-phosphate: step 1/5. This is Glyceraldehyde-3-phosphate dehydrogenase (gap) from Haloarcula vallismortis (Halobacterium vallismortis).